The chain runs to 471 residues: Glutamate--tRNA ligase (471 aa).

A 'HIGH' region motif is present at residues 9 to 19 (PSPTGYLHVGG). Positions 98, 100, 125, and 127 each coordinate Zn(2+). Positions 237–241 (KLSKR) match the 'KMSKS' region motif. Lys-240 serves as a coordination point for ATP.

This sequence belongs to the class-I aminoacyl-tRNA synthetase family. Glutamate--tRNA ligase type 1 subfamily. Monomer. Requires Zn(2+) as cofactor.

The protein localises to the cytoplasm. It catalyses the reaction tRNA(Glu) + L-glutamate + ATP = L-glutamyl-tRNA(Glu) + AMP + diphosphate. Functionally, catalyzes the attachment of glutamate to tRNA(Glu) in a two-step reaction: glutamate is first activated by ATP to form Glu-AMP and then transferred to the acceptor end of tRNA(Glu). The protein is Glutamate--tRNA ligase of Salmonella schwarzengrund (strain CVM19633).